The following is a 461-amino-acid chain: MLKEYRTVKEVVGPLMLVDGVENVKFDELVEIEIQTGEIRRGRVLEINEDKALVQLFEGSAGINIKGSKAKFLGKPLEISVSEDMLGRVFDGLGRPKDEGPRIIPEKRLDINGIPINPVARNYPSEFIQTGISAIDGLNTLVRGQKLPVFSGSGLPHAQLAAQIARQAKVLNSDSKFAVVFAAVGITFEEAEFFVDDFTKTGAIDRSVLFMNLANDPAIERIATPRMALTTAEYLAFEKGMHVLVILTDLTNYCEALREVSAARKEVPGRRGYPGYLYTDLATLYERAGRIKGKEGSITQIPILTMPEDDKTHPIPDLTGYITEGQIILSRELYRKGVMPPIDVLPSLSRLKDKGIGEGKTREDHADTMNQLFAGYAQGKEAKELAVILGESALSDVDKQYAKFGDAFEKQYVSQGFTTNRTIEETLNLGWELLSILPRTELKRIRDAYLEKYLPKEKSKE.

It belongs to the ATPase alpha/beta chains family.

Functionally, produces ATP from ADP in the presence of a proton gradient across the membrane. The V-type beta chain is a regulatory subunit. The protein is V-type ATP synthase beta chain 1 of Clostridium tetani (strain Massachusetts / E88).